The chain runs to 518 residues: Efflux pump terJ (518 aa).

The helical transmembrane segment at 43–63 threads the bilayer; the sequence is IAFIVVVCMAQLVSQAGLGQV. Asn79 is a glycosylation site (N-linked (GlcNAc...) asparagine). Transmembrane regions (helical) follow at residues 82–102, 112–132, 135–155, 177–197, 204–224, 244–264, 272–292, 311–331, 339–359, 364–384, 400–420, and 439–459; these read QLSWFPAAYSLTVGTFILGAG, LLFTAGYFWLAIWTLVAAFAE, GPVFFCCCRVLQGIGPAFLLP, AFGSTAPSGFIFGGLVSALAA, WGFWFMAILEAVCGIAAIFWV, IAGCVTGISGLLLFNVALNMA, PYIYILLIASLVFFGLFGYIE, FVLATLACGWAAFGVWVFYGW, GISPLFACLQFSPAAISGFVA, GLILQKLPASVVMMISAAAFC, WAQLFVSIIVMPWGMEMSFPA, and SLVATIMNYAISLGLGFGAIV. A glycan (N-linked (GlcNAc...) asparagine) is linked at Asn466. Residues 477–497 form a helical membrane-spanning segment; the sequence is AWYLGVGLAASGIILTMFFAL.

The protein belongs to the major facilitator superfamily.

It is found in the cell membrane. In terms of biological role, efflux pump that might be required for efficient secretion of terrein or other secondary metabolies produced by the terrein genne cluster. The polypeptide is Efflux pump terJ (Aspergillus terreus (strain NIH 2624 / FGSC A1156)).